A 364-amino-acid chain; its full sequence is MANKTILFNKHLESNAKMVDFHGWDMPLNYGSQIEEHNAVRQDAGMFDVSHMTVVDVIGNDACAFLRKLLANDVAKLKVPGKALYGGMLDENAGVIDDLITYYLTDTNYRVVVNSATREKDLAWIAKQSQGFDVTVTERPELAMIAVQGPNAKAKAAAVLSAEQNTAIEGMKPFFGKQAGSLFIATTGYTGEAGYEIIVPEDEAQAMWQALLDQGVKPCGLGARDTLRLEAGMNLYGLDMDETINPLAANMGWTIAWEPSDRDFIGRKALETLRDAGTDKLVGLVMEEKGVLRHDMPVFFTDSAGVEHQGVITSGTFSPTLGYSIAMARVPNSIGDTAEVEMRKKRVAVRVVAPNFVRNGKQAF.

This sequence belongs to the GcvT family. In terms of assembly, the glycine cleavage system is composed of four proteins: P, T, L and H.

The catalysed reaction is N(6)-[(R)-S(8)-aminomethyldihydrolipoyl]-L-lysyl-[protein] + (6S)-5,6,7,8-tetrahydrofolate = N(6)-[(R)-dihydrolipoyl]-L-lysyl-[protein] + (6R)-5,10-methylene-5,6,7,8-tetrahydrofolate + NH4(+). The glycine cleavage system catalyzes the degradation of glycine. The sequence is that of Aminomethyltransferase from Shewanella baltica (strain OS223).